A 238-amino-acid chain; its full sequence is uncharacterized protein (238 aa).

The 64-residue stretch at 1–64 (MRLDKYLSKS…KPKKNVYLML (64 aa)) folds into the S4 RNA-binding domain. D103 serves as the catalytic Nucleophile.

It belongs to the pseudouridine synthase RsuA family.

It catalyses the reaction a uridine in RNA = a pseudouridine in RNA. This is an uncharacterized protein from Aquifex aeolicus (strain VF5).